Here is a 392-residue protein sequence, read N- to C-terminus: MKRDLYETLGVARNADEKELKSAFRKLAMQYHPDRNPGDQEAEKSFKEINQAYETLKDPQKRAAYDRYGHAAFEQGGMGAGFGNGFAGGSAGGTSRHFRRHLRRDDGRRSSAPLLGRSRTRCGPSLQHGDHPRGGLFRQDGADPRADVGHLRRLHGLGREAGHQPEDLRHLPGLRPYPRRPGLLLDRTHLPDLRRSRSDDHRSLQQMPWPGPGHRGAHAVGQYSDRHRGRHAYPPLRRGRTGLRGGPPGDLYIFLSVRPHEFYQRDGADLYCSVPISMTTATLGGKFDVTTLDGTKSRVTVPEGTQAGKQFRLKGKGMHGRALQPDGRPLYPDPDRDAAEAHQAPARIAAGVRADLVQGEQSAIDGLLLPHERFLRYTERIATPGFRLCPSP.

In terms of domain architecture, J spans 2 to 71 (KRDLYETLGV…RAAYDRYGHA (70 aa)). Disordered stretches follow at residues 103–142 (RRDDGRRSSAPLLGRSRTRCGPSLQHGDHPRGGLFRQDGA) and 157–244 (LGRE…TGLR). Basic and acidic residues predominate over residues 157 to 170 (LGREAGHQPEDLRH). Residues 171–185 (LPGLRPYPRRPGLLL) show a composition bias toward low complexity. Positions 186-203 (DRTHLPDLRRSRSDDHRS) are enriched in basic and acidic residues. Over residues 227–241 (HRGRHAYPPLRRGRT) the composition is skewed to basic residues.

This Rhizobium fredii (Sinorhizobium fredii) protein is Protein NolC (nolC).